A 344-amino-acid chain; its full sequence is Uroporphyrinogen decarboxylase (344 aa).

Residues 24-28, Phe-43, Asp-74, Tyr-149, Ser-204, and His-319 contribute to the substrate site; that span reads RQAGR.

Belongs to the uroporphyrinogen decarboxylase family. As to quaternary structure, homodimer.

The protein resides in the cytoplasm. The enzyme catalyses uroporphyrinogen III + 4 H(+) = coproporphyrinogen III + 4 CO2. It functions in the pathway porphyrin-containing compound metabolism; protoporphyrin-IX biosynthesis; coproporphyrinogen-III from 5-aminolevulinate: step 4/4. Catalyzes the decarboxylation of four acetate groups of uroporphyrinogen-III to yield coproporphyrinogen-III. The chain is Uroporphyrinogen decarboxylase from Agrobacterium fabrum (strain C58 / ATCC 33970) (Agrobacterium tumefaciens (strain C58)).